Reading from the N-terminus, the 189-residue chain is Peptidyl-tRNA hydrolase (189 aa).

Residue Y15 participates in tRNA binding. H20 acts as the Proton acceptor in catalysis. TRNA-binding residues include Y65, N67, and N113.

This sequence belongs to the PTH family. As to quaternary structure, monomer.

Its subcellular location is the cytoplasm. The enzyme catalyses an N-acyl-L-alpha-aminoacyl-tRNA + H2O = an N-acyl-L-amino acid + a tRNA + H(+). Functionally, hydrolyzes ribosome-free peptidyl-tRNAs (with 1 or more amino acids incorporated), which drop off the ribosome during protein synthesis, or as a result of ribosome stalling. Catalyzes the release of premature peptidyl moieties from peptidyl-tRNA molecules trapped in stalled 50S ribosomal subunits, and thus maintains levels of free tRNAs and 50S ribosomes. This chain is Peptidyl-tRNA hydrolase, found in Caldicellulosiruptor saccharolyticus (strain ATCC 43494 / DSM 8903 / Tp8T 6331).